The sequence spans 84 residues: Large ribosomal subunit protein bL27 (84 aa).

It belongs to the bacterial ribosomal protein bL27 family.

This Campylobacter jejuni subsp. jejuni serotype O:6 (strain 81116 / NCTC 11828) protein is Large ribosomal subunit protein bL27.